The primary structure comprises 147 residues: Myoglobin (147 aa).

One can recognise a Globin domain in the interval 2 to 141; that stretch reads ADFDAVLKCW…VIADLEANYK (140 aa). Position 60 (His60) interacts with nitrite. An O2-binding site is contributed by His60. His89 lines the heme b pocket.

The protein belongs to the globin family. As to quaternary structure, monomeric.

The protein resides in the cytoplasm. Its subcellular location is the sarcoplasm. It carries out the reaction Fe(III)-heme b-[protein] + nitric oxide + H2O = Fe(II)-heme b-[protein] + nitrite + 2 H(+). The enzyme catalyses H2O2 + AH2 = A + 2 H2O. Functionally, monomeric heme protein which primary function is to store oxygen and facilitate its diffusion within muscle tissues. Reversibly binds oxygen through a pentacoordinated heme iron and enables its timely and efficient release as needed during periods of heightened demand. Depending on the oxidative conditions of tissues and cells, and in addition to its ability to bind oxygen, it also has a nitrite reductase activity whereby it regulates the production of bioactive nitric oxide. Under stress conditions, like hypoxia and anoxia, it also protects cells against reactive oxygen species thanks to its pseudoperoxidase activity. This Auxis rochei (Bullet tuna) protein is Myoglobin (mb).